Here is a 436-residue protein sequence, read N- to C-terminus: MASSSLTSKSILGSTKLGSSSLPSELRRLSSPAVQISLRTQTRKNFQIQATGSSYGTHFRVSTFGESHGGGVGCIIDGCPPRIPLTESDLQFDLDRRRPGQSRITTPRKETDTCRISSGVSEGMTTGTPIHVFVPNTDQRGLDYSEMSVAYRPSHADATYDMKYGVRSVQGGGRSSARETIGRVAPGALAKKILKQFAGTEILAYVSQVHHVVLPEELVDHENLTLEQIENNIVRCPNPEYAEKMIAAIDAVRTKGNSVGGVVTCIVRNAPRGLGTPVFDKLEAELAKACMSLPATKGFEFGSGFAGTFLTGLEHNDEFYTDENGRIRTRTNRSGGIQGGISNGEIINMRVAFKPTSTIGRKQNTVTRDKVETEMIARGRHDPCVVPRAVPMVEAMVALVLVDQLMAQYAQCHLFPINPELQEPLQIEQPQNATAL.

The segment at 1–24 (MASSSLTSKSILGSTKLGSSSLPS) is disordered. Residues 1–50 (MASSSLTSKSILGSTKLGSSSLPSELRRLSSPAVQISLRTQTRKNFQIQA) constitute a chloroplast transit peptide.

It belongs to the chorismate synthase family. In terms of assembly, homotetramer. The cofactor is FMNH2.

The protein resides in the plastid. It localises to the chloroplast. The enzyme catalyses 5-O-(1-carboxyvinyl)-3-phosphoshikimate = chorismate + phosphate. It functions in the pathway metabolic intermediate biosynthesis; chorismate biosynthesis; chorismate from D-erythrose 4-phosphate and phosphoenolpyruvate: step 7/7. Functionally, catalyzes the last common step of the biosynthesis of aromatic amino acids, produced via the shikimic acid pathway. This chain is Chorismate synthase, chloroplastic (EMB1144), found in Arabidopsis thaliana (Mouse-ear cress).